Consider the following 117-residue polypeptide: LYR motif-containing protein 1 (117 aa).

Belongs to the complex I LYR family.

The polypeptide is LYR motif-containing protein 1 (lyrm1) (Dictyostelium discoideum (Social amoeba)).